The chain runs to 389 residues: Krueppel-like factor 17 (389 aa).

Disordered regions lie at residues 1–48 (MYGR…SGVH) and 239–279 (LVSQ…GSSE). Positions 26–38 (AQDNENSAPILNM) are enriched in polar residues. Positions 264-278 (KNSRPQEGTGRRGSS) are enriched in basic and acidic residues. 3 consecutive C2H2-type zinc fingers follow at residues 283 to 307 (YCCN…QRKH), 313 to 337 (YSCN…MRVH), and 343 to 365 (YKCD…QKTH). The disordered stretch occupies residues 356–389 (DHLKQHQKTHRPGPSDPQANNNNGEQDSPPAAGP). The span at 372–381 (PQANNNNGEQ) shows a compositional bias: polar residues.

This sequence belongs to the Sp1 C2H2-type zinc-finger protein family.

The protein localises to the nucleus. Its function is as follows. Transcription repressor that binds to the promoter of target genes and prevents their expression. Acts as a negative regulator of epithelial-mesenchymal transition and metastasis in breast cancer. Specifically binds the 5'-CACCC-3' sequence in the promoter of ID1, a key metastasis regulator in breast cancer, and repress its expression. May be a germ cell-specific transcription factor that plays important roles in spermatid differentiation and oocyte development. This is Krueppel-like factor 17 (KLF17) from Homo sapiens (Human).